Reading from the N-terminus, the 119-residue chain is Large ribosomal subunit protein bL20 (119 aa).

The protein belongs to the bacterial ribosomal protein bL20 family.

In terms of biological role, binds directly to 23S ribosomal RNA and is necessary for the in vitro assembly process of the 50S ribosomal subunit. It is not involved in the protein synthesizing functions of that subunit. This chain is Large ribosomal subunit protein bL20, found in Treponema denticola (strain ATCC 35405 / DSM 14222 / CIP 103919 / JCM 8153 / KCTC 15104).